The following is a 110-amino-acid chain: G antigen 2E (110 aa).

Residues 1-110 (MSWRGRSTYY…NPEEVKTPEE (110 aa)) are disordered. Composition is skewed to acidic residues over residues 32–45 (FSDE…EEGE) and 87–96 (ECEDGPDGQE).

Belongs to the GAGE family.

This Homo sapiens (Human) protein is G antigen 2E (GAGE2E).